Reading from the N-terminus, the 213-residue chain is Pyrrolidone-carboxylate peptidase (213 aa).

Catalysis depends on residues E81, C144, and H166.

Belongs to the peptidase C15 family. Homotetramer.

The protein localises to the cytoplasm. The catalysed reaction is Release of an N-terminal pyroglutamyl group from a polypeptide, the second amino acid generally not being Pro.. In terms of biological role, removes 5-oxoproline from various penultimate amino acid residues except L-proline. The chain is Pyrrolidone-carboxylate peptidase from Pseudomonas fluorescens (strain SBW25).